Reading from the N-terminus, the 383-residue chain is Odorant receptor 94b (383 aa).

The Cytoplasmic segment spans residues 1–41 (MESTNRLSAIQTLLVIQRWIGLLKWENEGEDGVLTWLKRIY). The helical transmembrane segment at 42-62 (PFVLHLPLTFTYIALMWYEAI) threads the bilayer. The Extracellular portion of the chain corresponds to 63–70 (TSSDFEEA). The chain crosses the membrane as a helical span at residues 71-91 (GQVLYMSITELALVTKLLNIW). The Cytoplasmic segment spans residues 92–130 (YRRHEAASLIHELQHDPAFNLRNSEEIKFWQQNQRNFKR). Residues 131 to 151 (IFYWYIWGSLFVAVMGYISVF) form a helical membrane-spanning segment. At 152–174 (FQEDYELPFGYYVPFEWRTRERY) the chain is on the extracellular side. Residues 175–195 (FYAWGYNVVAMTLCCLSNILL) form a helical membrane-spanning segment. The Cytoplasmic segment spans residues 196-250 (DTLGCYFMFHIASLFRLLGMRLEALKNAAEEKARPELRRIFQLHTKVRRLTRECE). The helical transmembrane segment at 251–271 (VLVSPYVLSQVVFSAFIICFS) threads the bilayer. Residues 272 to 284 (AYRLVHMGFKQRP) lie on the Extracellular side of the membrane. Residues 285–305 (GLFVTTVQFVAVMIVQIFLPC) traverse the membrane as a helical segment. Residues 306–358 (YYGNELTFHANALTNSVFGTNWLEYSVGTRKLLNCYMEFLKRPVKVRAGVFFE) lie on the Cytoplasmic side of the membrane. Residues 359-379 (IGLPIFVKTINNAYSFFALLL) traverse the membrane as a helical segment. Over 380 to 383 (KISK) the chain is Extracellular.

This sequence belongs to the insect chemoreceptor superfamily. Heteromeric odorant receptor channel (TC 1.A.69) family. Or2a subfamily. As to quaternary structure, interacts with Orco. Complexes exist early in the endomembrane system in olfactory sensory neurons (OSNs), coupling these complexes to the conserved ciliary trafficking pathway.

It localises to the cell membrane. Its function is as follows. Odorant receptor which mediates acceptance or avoidance behavior, depending on its substrates. The odorant receptor repertoire encodes a large collection of odor stimuli that vary widely in identity, intensity, and duration. May form a complex with Orco to form odorant-sensing units, providing sensitive and prolonged odorant signaling and calcium permeability. The sequence is that of Odorant receptor 94b (Or94b) from Drosophila melanogaster (Fruit fly).